A 556-amino-acid chain; its full sequence is Formate--tetrahydrofolate ligase (556 aa).

Thr-65–Thr-72 lines the ATP pocket.

Belongs to the formate--tetrahydrofolate ligase family.

The enzyme catalyses (6S)-5,6,7,8-tetrahydrofolate + formate + ATP = (6R)-10-formyltetrahydrofolate + ADP + phosphate. It participates in one-carbon metabolism; tetrahydrofolate interconversion. The polypeptide is Formate--tetrahydrofolate ligase (Hyphomonas neptunium (strain ATCC 15444)).